Here is a 236-residue protein sequence, read N- to C-terminus: MDAVSVVYGITAAGFAVGVAIVGFLYASLEGSDERPILAALALIPGVAGISYVAMVFGIGTVTIGETTLVGFRYLDWVVTTPLLVGFIGYTAGASRRAIFGVMAADALMILAGVGAVVAAGTLKWALFGVSAVFHISLFAYLYLIFPRSVPDDPQRIGLFSLLKNHVGLLWIAYPLVWLAGPEGLGFATYVGVSITYAFLDLLAKVPYVYFFYARRQVFATKLLRDSGDTTVTPAD.

A run of 7 helical transmembrane segments spans residues 6-26, 37-57, 74-94, 98-118, 126-146, 167-187, and 192-212; these read VVYG…GFLY, ILAA…AMVF, YLDW…TAGA, AIFG…GAVV, ALFG…YLIF, VGLL…GLGF, and GVSI…VYFF. The residue at position 205 (lysine 205) is an N6-(retinylidene)lysine.

The protein belongs to the archaeal/bacterial/fungal opsin family. As to quaternary structure, interacts with Htr1. The covalent binding of retinal to the apoprotein, bacterioopsin, generates bacteriorhodopsin.

Its subcellular location is the membrane. In terms of biological role, photoattractant rhodopsin. The sequence is that of Sensory rhodopsin I (sop1) from Haloarcula marismortui (strain ATCC 43049 / DSM 3752 / JCM 8966 / VKM B-1809) (Halobacterium marismortui).